We begin with the raw amino-acid sequence, 167 residues long: MLVNEGIRAREVRLVGANGDQIGVKSKHEALEMAQRVNLDLVCVAPNAKPPVCRIMDYGKYRYEQQKKEKEARKNQKVITIKEVRLSPTIEANDFNTKLRNARKFLEKGDKVKASIRFRGRAITHSQIGRDVLERLAKECEDIATIEARPKMEGRSMFLVMAPKTEK.

The protein belongs to the IF-3 family. Monomer.

It is found in the cytoplasm. Functionally, IF-3 binds to the 30S ribosomal subunit and shifts the equilibrium between 70S ribosomes and their 50S and 30S subunits in favor of the free subunits, thus enhancing the availability of 30S subunits on which protein synthesis initiation begins. This Shouchella clausii (strain KSM-K16) (Alkalihalobacillus clausii) protein is Translation initiation factor IF-3.